Reading from the N-terminus, the 227-residue chain is Ribosomal RNA large subunit methyltransferase E (227 aa).

S-adenosyl-L-methionine contacts are provided by G78, W80, D103, D119, and D143. Catalysis depends on K183, which acts as the Proton acceptor.

This sequence belongs to the class I-like SAM-binding methyltransferase superfamily. RNA methyltransferase RlmE family.

It is found in the cytoplasm. The enzyme catalyses uridine(2552) in 23S rRNA + S-adenosyl-L-methionine = 2'-O-methyluridine(2552) in 23S rRNA + S-adenosyl-L-homocysteine + H(+). Its function is as follows. Specifically methylates the uridine in position 2552 of 23S rRNA at the 2'-O position of the ribose in the fully assembled 50S ribosomal subunit. The protein is Ribosomal RNA large subunit methyltransferase E of Rickettsia typhi (strain ATCC VR-144 / Wilmington).